The following is a 298-amino-acid chain: Probable 2-(5''-triphosphoribosyl)-3'-dephosphocoenzyme-A synthase 2 (298 aa).

This sequence belongs to the CitG/MdcB family.

The enzyme catalyses 3'-dephospho-CoA + ATP = 2'-(5''-triphospho-alpha-D-ribosyl)-3'-dephospho-CoA + adenine. The protein is Probable 2-(5''-triphosphoribosyl)-3'-dephosphocoenzyme-A synthase 2 of Salmonella typhi.